The sequence spans 77 residues: DNA-directed RNA polymerase subunit omega (77 aa).

Belongs to the RNA polymerase subunit omega family. As to quaternary structure, in cyanobacteria the RNAP catalytic core is composed of 2 alpha, 1 beta, 1 beta', 1 gamma and 1 omega subunit. When a sigma factor is associated with the core the holoenzyme is formed, which can initiate transcription.

The catalysed reaction is RNA(n) + a ribonucleoside 5'-triphosphate = RNA(n+1) + diphosphate. Promotes RNA polymerase assembly. Latches the N- and C-terminal regions of the beta' subunit thereby facilitating its interaction with the beta and alpha subunits. The protein is DNA-directed RNA polymerase subunit omega of Thermosynechococcus vestitus (strain NIES-2133 / IAM M-273 / BP-1).